The following is a 244-amino-acid chain: uncharacterized protein (244 aa).

The region spanning 5 to 244 (QLLLAHRGYS…ANKKFEIKIN (240 aa)) is the GP-PDE domain.

To glycerophosphoryl diester phosphodiesterases (EC 3.1.4.46). The protein to M.genitalium MG385.

This is an uncharacterized protein from Mycoplasma genitalium (strain ATCC 33530 / DSM 19775 / NCTC 10195 / G37) (Mycoplasmoides genitalium).